Reading from the N-terminus, the 198-residue chain is Na(+)-translocating NADH-quinone reductase subunit E (198 aa).

6 consecutive transmembrane segments (helical) span residues 11 to 31 (SIFI…FLAV), 39 to 59 (FGLG…NNLV), 77 to 97 (FLSF…LEMI), 110 to 130 (GIFL…SFMV), 140 to 160 (VVYG…LAGI), and 176 to 196 (LGIT…FSGV).

Belongs to the NqrDE/RnfAE family. In terms of assembly, composed of six subunits; NqrA, NqrB, NqrC, NqrD, NqrE and NqrF.

Its subcellular location is the cell inner membrane. It carries out the reaction a ubiquinone + n Na(+)(in) + NADH + H(+) = a ubiquinol + n Na(+)(out) + NAD(+). Functionally, NQR complex catalyzes the reduction of ubiquinone-1 to ubiquinol by two successive reactions, coupled with the transport of Na(+) ions from the cytoplasm to the periplasm. NqrA to NqrE are probably involved in the second step, the conversion of ubisemiquinone to ubiquinol. This Aliivibrio fischeri (strain ATCC 700601 / ES114) (Vibrio fischeri) protein is Na(+)-translocating NADH-quinone reductase subunit E.